A 110-amino-acid polypeptide reads, in one-letter code: Phosphoribosyl-AMP cyclohydrolase (110 aa).

Asp80 provides a ligand contact to Mg(2+). Zn(2+) is bound at residue Cys81. Mg(2+)-binding residues include Asp82 and Asp84. 2 residues coordinate Zn(2+): Cys97 and Cys104.

It belongs to the PRA-CH family. In terms of assembly, homodimer. Mg(2+) is required as a cofactor. Zn(2+) serves as cofactor.

The protein localises to the cytoplasm. It carries out the reaction 1-(5-phospho-beta-D-ribosyl)-5'-AMP + H2O = 1-(5-phospho-beta-D-ribosyl)-5-[(5-phospho-beta-D-ribosylamino)methylideneamino]imidazole-4-carboxamide. The protein operates within amino-acid biosynthesis; L-histidine biosynthesis; L-histidine from 5-phospho-alpha-D-ribose 1-diphosphate: step 3/9. Catalyzes the hydrolysis of the adenine ring of phosphoribosyl-AMP. The chain is Phosphoribosyl-AMP cyclohydrolase from Clostridium botulinum (strain Kyoto / Type A2).